The sequence spans 378 residues: Transaldolase 1 (378 aa).

Catalysis depends on lysine 146, which acts as the Schiff-base intermediate with substrate.

Belongs to the transaldolase family. Type 2 subfamily.

The protein resides in the cytoplasm. It catalyses the reaction D-sedoheptulose 7-phosphate + D-glyceraldehyde 3-phosphate = D-erythrose 4-phosphate + beta-D-fructose 6-phosphate. The protein operates within carbohydrate degradation; pentose phosphate pathway; D-glyceraldehyde 3-phosphate and beta-D-fructose 6-phosphate from D-ribose 5-phosphate and D-xylulose 5-phosphate (non-oxidative stage): step 2/3. In terms of biological role, transaldolase is important for the balance of metabolites in the pentose-phosphate pathway. In Streptomyces avermitilis (strain ATCC 31267 / DSM 46492 / JCM 5070 / NBRC 14893 / NCIMB 12804 / NRRL 8165 / MA-4680), this protein is Transaldolase 1.